The sequence spans 99 residues: Malonate decarboxylase acyl carrier protein (99 aa).

Residue Ser-25 is modified to O-(phosphoribosyl dephospho-coenzyme A)serine.

This sequence belongs to the MdcC family. In terms of processing, covalently binds the prosthetic group of malonate decarboxylase.

It localises to the cytoplasm. In terms of biological role, subunit of malonate decarboxylase, it is an acyl carrier protein to which acetyl and malonyl thioester residues are bound via a 2'-(5''-phosphoribosyl)-3'-dephospho-CoA prosthetic group and turn over during the catalytic mechanism. The polypeptide is Malonate decarboxylase acyl carrier protein (Azotobacter vinelandii (strain DJ / ATCC BAA-1303)).